The primary structure comprises 235 residues: Ribitol-5-phosphate cytidylyltransferase (235 aa).

Residues 7–10 (LAGG), 82–88 (GADRNTS), and Ser113 each bind CTP.

Belongs to the IspD/TarI cytidylyltransferase family. TarI subfamily.

The catalysed reaction is D-ribitol 5-phosphate + CTP + H(+) = CDP-L-ribitol + diphosphate. Its pathway is cell wall biogenesis; poly(ribitol phosphate) teichoic acid biosynthesis. Functionally, catalyzes the transfer of the cytidylyl group of CTP to D-ribitol 5-phosphate. The polypeptide is Ribitol-5-phosphate cytidylyltransferase (Streptococcus pneumoniae (strain CGSP14)).